Consider the following 476-residue polypeptide: Calcitonin gene-related peptide type 1 receptor (476 aa).

The N-terminal stretch at 1 to 33 (METLQMGLLSRSALFKYIIIFLIMINTRGYVLA) is a signal peptide. Topologically, residues 34–154 (SQEQEAKTSV…FTHEKVKTAL (121 aa)) are extracellular. 3 disulfides stabilise this stretch: cysteine 63/cysteine 89, cysteine 80/cysteine 120, and cysteine 103/cysteine 142. N-linked (GlcNAc...) asparagine glycosylation is found at asparagine 81, asparagine 133, and asparagine 138. The helical transmembrane segment at 155-179 (NLYYLTIIGHGLSIASLLISLGIFF) threads the bilayer. At 180-190 (YFKNLSCQRIT) the chain is on the cytoplasmic side. Residues 191–213 (LHKNLFFSFVCNSIITIISLSAV) form a helical membrane-spanning segment. Topologically, residues 214–224 (ANNQALVATNP) are extracellular. A helical transmembrane segment spans residues 225–253 (VICKISQFIHLYLMGCNYFWMLCEGIYLH). The Cytoplasmic portion of the chain corresponds to 254–267 (TLIVVAVFAEKQHL). Residues 268 to 288 (MWYYLLGWGFPLIPACIHAVA) traverse the membrane as a helical segment. The Extracellular portion of the chain corresponds to 289–304 (RSLYYNDNCWISSETH). Residues 305–329 (LLYIIHGPICAALLVNLFFLLNIVR) traverse the membrane as a helical segment. The Cytoplasmic portion of the chain corresponds to 330–344 (VLITKLKVTHQAESN). A helical transmembrane segment spans residues 345–366 (LYMKAVRATLILVPLLGIEFVL). At 367–381 (FPWKPEGRIAEEIYD) the chain is on the extracellular side. The chain crosses the membrane as a helical span at residues 382–402 (YVMHILMHYQGLLVATIFCFF). Over 403–476 (NGEVQAVLKR…VFFKTEKQYM (74 aa)) the chain is Cytoplasmic.

The protein belongs to the G-protein coupled receptor 2 family.

It localises to the cell membrane. In terms of biological role, may function as G protein-coupled receptor for calcitonin-gene-related peptides and adrenomedullin. Specificity may be modulated by accessory proteins. May activate cAMP-dependent pathway. In Xenopus laevis (African clawed frog), this protein is Calcitonin gene-related peptide type 1 receptor (calcrl).